A 90-amino-acid chain; its full sequence is Antitoxin VapB35 (90 aa).

The tract at residues glycine 53 to tyrosine 90 is disordered.

The protein belongs to the phD/YefM antitoxin family.

Functionally, antitoxin component of a type II toxin-antitoxin (TA) system. Neutralizes the effect of cognate toxin VapC35. The chain is Antitoxin VapB35 (vapB35) from Mycobacterium tuberculosis (strain CDC 1551 / Oshkosh).